The following is a 394-amino-acid chain: Probable dual specificity protein phosphatase DDB_G0281963 (394 aa).

The 141-residue stretch at 2–142 folds into the Tyrosine-protein phosphatase domain; it reads NDVSRIFPGF…LKKYELILKK (141 aa). Catalysis depends on cysteine 86, which acts as the Phosphocysteine intermediate. Residues 147 to 191 are disordered; sequence PQIVEKESEEEDDDEDDDDDDYDSDEDDDDDSEDDDFEEEFDNVV. Over residues 153–188 the composition is skewed to acidic residues; it reads ESEEEDDDEDDDDDDYDSDEDDDDDSEDDDFEEEFD.

It belongs to the protein-tyrosine phosphatase family. Non-receptor class dual specificity subfamily.

It catalyses the reaction O-phospho-L-tyrosyl-[protein] + H2O = L-tyrosyl-[protein] + phosphate. The catalysed reaction is O-phospho-L-seryl-[protein] + H2O = L-seryl-[protein] + phosphate. The enzyme catalyses O-phospho-L-threonyl-[protein] + H2O = L-threonyl-[protein] + phosphate. Has a dual specificity toward Ser/Thr and Tyr-containing proteins. This is Probable dual specificity protein phosphatase DDB_G0281963 from Dictyostelium discoideum (Social amoeba).